Consider the following 150-residue polypeptide: 3-dehydroquinate dehydratase (150 aa).

Residue Tyr26 is the Proton acceptor of the active site. Residues Asn77, His83, and Asp90 each contribute to the substrate site. His103 serves as the catalytic Proton donor. Residues 104-105 and Arg114 each bind substrate; that span reads LS.

The protein belongs to the type-II 3-dehydroquinase family. In terms of assembly, homododecamer.

The enzyme catalyses 3-dehydroquinate = 3-dehydroshikimate + H2O. It functions in the pathway metabolic intermediate biosynthesis; chorismate biosynthesis; chorismate from D-erythrose 4-phosphate and phosphoenolpyruvate: step 3/7. In terms of biological role, catalyzes a trans-dehydration via an enolate intermediate. The protein is 3-dehydroquinate dehydratase of Yersinia enterocolitica serotype O:8 / biotype 1B (strain NCTC 13174 / 8081).